A 209-amino-acid polypeptide reads, in one-letter code: Small ribosomal subunit protein uS4 (209 aa).

Positions 22-45 are disordered; that stretch reads RGRNPLLRKPNPPGQHGMQRKKKS. An S4 RNA-binding domain is found at 93 to 154; that stretch reads CRLDNIVYRL…KSKRLAIVTE (62 aa).

This sequence belongs to the universal ribosomal protein uS4 family. In terms of assembly, part of the 30S ribosomal subunit. Contacts protein S5. The interaction surface between S4 and S5 is involved in control of translational fidelity.

Functionally, one of the primary rRNA binding proteins, it binds directly to 16S rRNA where it nucleates assembly of the body of the 30S subunit. In terms of biological role, with S5 and S12 plays an important role in translational accuracy. This chain is Small ribosomal subunit protein uS4, found in Chlamydia trachomatis serovar A (strain ATCC VR-571B / DSM 19440 / HAR-13).